The chain runs to 174 residues: Phospholipase A2-like protein Y52B11A.8 (174 aa).

A signal peptide spans 1–18 (MRGLLVATWIFVSVAASA). N-linked (GlcNAc...) asparagine glycans are attached at residues Asn-49 and Asn-143. The segment at 137-174 (YEASGPNASTTEESPAEKDDYDYESHVAGLNATPSSST) is disordered.

The protein belongs to the phospholipase A2 family.

It localises to the secreted. The protein is Phospholipase A2-like protein Y52B11A.8 of Caenorhabditis elegans.